We begin with the raw amino-acid sequence, 211 residues long: MKNVDYKLYLVTDRKVLKERDLYKSIEEAIKGGVTLVQLREKEMSTLDFYESALKLKKITETYKIPLIINDRIDIALAINADGVHIGQSDMPLIKARELLGKDKIIGVSAHSIEEALEAERNGATYLGVGAIYNTSTKGDAQAVSLEELKNIKNSVKIPVVGIGGINEENANKVIETGVDGISVISGILSAQKIKDKARVMFDIVKKNSTK.

Residues glutamine 38–lysine 42 and asparagine 70 each bind 4-amino-2-methyl-5-(diphosphooxymethyl)pyrimidine. The Mg(2+) site is built by aspartate 71 and aspartate 90. Serine 109 contributes to the 4-amino-2-methyl-5-(diphosphooxymethyl)pyrimidine binding site. Threonine 135–threonine 137 contacts 2-[(2R,5Z)-2-carboxy-4-methylthiazol-5(2H)-ylidene]ethyl phosphate. 4-amino-2-methyl-5-(diphosphooxymethyl)pyrimidine is bound at residue lysine 138. Residues glycine 165 and isoleucine 185–serine 186 each bind 2-[(2R,5Z)-2-carboxy-4-methylthiazol-5(2H)-ylidene]ethyl phosphate.

The protein belongs to the thiamine-phosphate synthase family. Mg(2+) is required as a cofactor.

The enzyme catalyses 2-[(2R,5Z)-2-carboxy-4-methylthiazol-5(2H)-ylidene]ethyl phosphate + 4-amino-2-methyl-5-(diphosphooxymethyl)pyrimidine + 2 H(+) = thiamine phosphate + CO2 + diphosphate. The catalysed reaction is 2-(2-carboxy-4-methylthiazol-5-yl)ethyl phosphate + 4-amino-2-methyl-5-(diphosphooxymethyl)pyrimidine + 2 H(+) = thiamine phosphate + CO2 + diphosphate. It catalyses the reaction 4-methyl-5-(2-phosphooxyethyl)-thiazole + 4-amino-2-methyl-5-(diphosphooxymethyl)pyrimidine + H(+) = thiamine phosphate + diphosphate. It participates in cofactor biosynthesis; thiamine diphosphate biosynthesis; thiamine phosphate from 4-amino-2-methyl-5-diphosphomethylpyrimidine and 4-methyl-5-(2-phosphoethyl)-thiazole: step 1/1. Functionally, condenses 4-methyl-5-(beta-hydroxyethyl)thiazole monophosphate (THZ-P) and 2-methyl-4-amino-5-hydroxymethyl pyrimidine pyrophosphate (HMP-PP) to form thiamine monophosphate (TMP). In Clostridium acetobutylicum (strain ATCC 824 / DSM 792 / JCM 1419 / IAM 19013 / LMG 5710 / NBRC 13948 / NRRL B-527 / VKM B-1787 / 2291 / W), this protein is Thiamine-phosphate synthase.